The primary structure comprises 158 residues: MKVTIYTDGAARGNPDGPGGYGTILSYIDSTGVEHIREYSGGYKKTTNNRMELMAAIVGLEALTKPCVVTLYSDSQYVVKAFNEHWLDGWIKKGWKRGKNEPVKNVDLWKRLLAAKNQHDVTFCWVKGHDGHPQNERCDVLATTAADGGNLADDNVVE.

The region spanning 1-147 (MKVTIYTDGA…CDVLATTAAD (147 aa)) is the RNase H type-1 domain. Mg(2+) is bound by residues Asp8, Glu52, Asp74, and Asp139.

The protein belongs to the RNase H family. As to quaternary structure, monomer. It depends on Mg(2+) as a cofactor.

It is found in the cytoplasm. The catalysed reaction is Endonucleolytic cleavage to 5'-phosphomonoester.. Endonuclease that specifically degrades the RNA of RNA-DNA hybrids. The sequence is that of Ribonuclease H from Lachnoclostridium phytofermentans (strain ATCC 700394 / DSM 18823 / ISDg) (Clostridium phytofermentans).